A 75-amino-acid chain; its full sequence is uncharacterized protein (75 aa).

The first 26 residues, M1–A26, serve as a signal peptide directing secretion.

Its subcellular location is the secreted. This is an uncharacterized protein from Schizosaccharomyces pombe (strain 972 / ATCC 24843) (Fission yeast).